Reading from the N-terminus, the 354-residue chain is Selenide, water dikinase (354 aa).

Cys23 is a catalytic residue. ATP-binding positions include Lys26 and Thr54–Asp56. Asp57 contacts Mg(2+). ATP-binding positions include Asp74, Asp97, and Gly145 to Ser147. Residue Asp97 participates in Mg(2+) binding. Asp233 provides a ligand contact to Mg(2+).

Belongs to the selenophosphate synthase 1 family. Class I subfamily. As to quaternary structure, homodimer. The cofactor is Mg(2+).

The enzyme catalyses hydrogenselenide + ATP + H2O = selenophosphate + AMP + phosphate + 2 H(+). Functionally, synthesizes selenophosphate from selenide and ATP. This is Selenide, water dikinase from Paraburkholderia xenovorans (strain LB400).